We begin with the raw amino-acid sequence, 157 residues long: S-ribosylhomocysteine lyase (157 aa).

Residues histidine 54, histidine 58, and cysteine 124 each coordinate Fe cation.

It belongs to the LuxS family. In terms of assembly, homodimer. Requires Fe cation as cofactor.

The catalysed reaction is S-(5-deoxy-D-ribos-5-yl)-L-homocysteine = (S)-4,5-dihydroxypentane-2,3-dione + L-homocysteine. Its function is as follows. Involved in the synthesis of autoinducer 2 (AI-2) which is secreted by bacteria and is used to communicate both the cell density and the metabolic potential of the environment. The regulation of gene expression in response to changes in cell density is called quorum sensing. Catalyzes the transformation of S-ribosylhomocysteine (RHC) to homocysteine (HC) and 4,5-dihydroxy-2,3-pentadione (DPD). The sequence is that of S-ribosylhomocysteine lyase from Lactobacillus acidophilus (strain ATCC 700396 / NCK56 / N2 / NCFM).